A 252-amino-acid polypeptide reads, in one-letter code: Petrobactin import ATP-binding protein YclP (252 aa).

One can recognise an ABC transporter domain in the interval 2 to 236 (VEVRNVSKQY…SVLEEIYDMT (235 aa)). 34 to 41 (GPNGAGKS) serves as a coordination point for ATP.

The protein belongs to the ABC transporter superfamily. As to quaternary structure, the complex is composed of two ATP-binding proteins (YclP), two transmembrane proteins (YclN and YclO) and a solute-binding protein (YclQ).

It is found in the cell membrane. It carries out the reaction a Fe(III)-siderophore(out) + ATP + H2O = a Fe(III)-siderophore(in) + ADP + phosphate + H(+). In terms of biological role, part of the ABC transporter complex YclNOPQ involved in uptake of ferric-petrobactin. Petrobactin is a photoreactive 3,4-catecholate siderophore produced by many members of the B.cereus group, including B.anthracis. Probably responsible for energy coupling to the transport system. The chain is Petrobactin import ATP-binding protein YclP (yclP) from Bacillus subtilis (strain 168).